The primary structure comprises 379 residues: Tryptophan 2,3-dioxygenase (379 aa).

Substrate is bound by residues 57–61 (FIITH) and R128. H312 lines the heme pocket. T327 serves as a coordination point for substrate.

The protein belongs to the tryptophan 2,3-dioxygenase family. In terms of assembly, homotetramer. Dimer of dimers. Heme is required as a cofactor.

The enzyme catalyses L-tryptophan + O2 = N-formyl-L-kynurenine. It functions in the pathway amino-acid degradation; L-tryptophan degradation via kynurenine pathway; L-kynurenine from L-tryptophan: step 1/2. The protein operates within pigment biosynthesis; ommochrome biosynthesis. In terms of biological role, heme-dependent dioxygenase that catalyzes the oxidative cleavage of the L-tryptophan (L-Trp) pyrrole ring and converts L-tryptophan to N-formyl-L-kynurenine. Catalyzes the oxidative cleavage of the indole moiety. This Drosophila sechellia (Fruit fly) protein is Tryptophan 2,3-dioxygenase.